Reading from the N-terminus, the 309-residue chain is Low-density lipoprotein receptor-related protein 1 (309 aa).

Belongs to the LDLR family.

Its subcellular location is the endoplasmic reticulum. It localises to the golgi apparatus. The protein resides in the endosome. In terms of biological role, involved in endocytosis, fatty acid beta-oxidation and infectious growth. Plays a critical role in the accumulation of MSN2 from the cytosol to the nucleus by activating the cyclic AMP signaling pathway. MSN2 can then target the dienoyl-coenzyme A isomerase DCI1 and other genes involved in fatty acid beta-oxidation, which is important for lipid droplets degradation and infectious growth. The chain is Low-density lipoprotein receptor-related protein 1 from Pyricularia oryzae (strain 70-15 / ATCC MYA-4617 / FGSC 8958) (Rice blast fungus).